We begin with the raw amino-acid sequence, 507 residues long: Dolichyl pyrophosphate Man9GlcNAc2 alpha-1,3-glucosyltransferase (507 aa).

Over 1-2 (ME) the chain is Cytoplasmic. A helical transmembrane segment spans residues 3–23 (SWTWMTVVVLLGLTVRWTVSL). Residues 24–114 (NSYSGAGKPP…SQAHKLFMRT (91 aa)) lie on the Lumenal side of the membrane. N-linked (GlcNAc...) asparagine glycosylation is present at asparagine 59. The chain crosses the membrane as a helical span at residues 115–135 (TVLAADLLIYIPAVLLYCYSL). Residues 136–143 (KEISPKRK) are Cytoplasmic-facing. The helical transmembrane segment at 144-164 (IASALCILLYPGLILIDYGHF) threads the bilayer. Over 165 to 172 (QYNSVSLG) the chain is Lumenal. A helical membrane pass occupies residues 173-193 (FALWGVLGVSCDWDLLGSLAF). Residues 194–229 (CLALNYKQMELYHSLPFFCFLLGKCFKKGLRGKGSA) lie on the Cytoplasmic side of the membrane. A helical membrane pass occupies residues 230–250 (LFIRIACTVVASFLLCWLPFL). Residues 251-297 (TEREHALQVVRRLFPVDRGLFEDKVANIWCSLNVFLKIKDILPRHIQ) are Lumenal-facing. The helical transmembrane segment at 298–318 (IAISFCFTFLSLLPACIKLTV) threads the bilayer. Over 319–332 (QPSAKGFRFTLVSC) the chain is Cytoplasmic. The helical transmembrane segment at 333–353 (ALSFFLFSFQVHEKSILLVSL) threads the bilayer. At 354-361 (PVCLVLTE) the chain is on the lumenal side. Residues 362–382 (IPFMSTWFLLVSTFSMLPLLL) traverse the membrane as a helical segment. At 383–385 (KDQ) the chain is on the cytoplasmic side. Residues 386-406 (LLLPSVVTVMAFLIACSTFFP) form a helical membrane-spanning segment. The Lumenal segment spans residues 407–437 (MFENTSEEQLQLKSFAVSVRRHLPGFTFLPR). The chain crosses the membrane as a helical span at residues 438–458 (IIQCLFLSSVITMILLTILSV). Residues 459–468 (TLDPPQKLPD) lie on the Cytoplasmic side of the membrane. Residues 469–489 (LFSVLICFVSCVNFVFFLVYF) traverse the membrane as a helical segment. The Lumenal portion of the chain corresponds to 490-507 (NIVIMWDSKNGRNRKKID).

This sequence belongs to the ALG6/ALG8 glucosyltransferase family.

It is found in the endoplasmic reticulum membrane. The catalysed reaction is an alpha-D-Man-(1-&gt;2)-alpha-D-Man-(1-&gt;2)-alpha-D-Man-(1-&gt;3)-[alpha-D-Man-(1-&gt;2)-alpha-D-Man-(1-&gt;3)-[alpha-D-Man-(1-&gt;2)-alpha-D-Man-(1-&gt;6)]-alpha-D-Man-(1-&gt;6)]-beta-D-Man-(1-&gt;4)-beta-D-GlcNAc-(1-&gt;4)-alpha-D-GlcNAc-diphospho-di-trans,poly-cis-dolichol + a di-trans,poly-cis-dolichyl beta-D-glucosyl phosphate = an alpha-D-Glc-(1-&gt;3)-alpha-D-Man-(1-&gt;2)-alpha-D-Man-(1-&gt;2)-alpha-D-Man-(1-&gt;3)-[alpha-D-Man-(1-&gt;2)-alpha-D-Man-(1-&gt;3)-[alpha-D-Man-(1-&gt;2)-alpha-D-Man-(1-&gt;6)]-alpha-D-Man-(1-&gt;6)]-beta-D-Man-(1-&gt;4)-beta-D-GlcNAc-(1-&gt;4)-alpha-D-GlcNAc-diphospho-di-trans,poly-cis-dolichol + a di-trans,poly-cis-dolichyl phosphate + H(+). It participates in protein modification; protein glycosylation. Its function is as follows. Dolichyl pyrophosphate Man9GlcNAc2 alpha-1,3-glucosyltransferase that operates in the biosynthetic pathway of dolichol-linked oligosaccharides, the glycan precursors employed in protein asparagine (N)-glycosylation. The assembly of dolichol-linked oligosaccharides begins on the cytosolic side of the endoplasmic reticulum membrane and finishes in its lumen. The sequential addition of sugars to dolichol pyrophosphate produces dolichol-linked oligosaccharides containing fourteen sugars, including two GlcNAcs, nine mannoses and three glucoses. Once assembled, the oligosaccharide is transferred from the lipid to nascent proteins by oligosaccharyltransferases. In the lumen of the endoplasmic reticulum, adds the first glucose residue from dolichyl phosphate glucose (Dol-P-Glc) onto the lipid-linked oligosaccharide intermediate Man(9)GlcNAc(2)-PP-Dol to produce Glc(1)Man(9)GlcNAc(2)-PP-Dol. Glc(1)Man(9)GlcNAc(2)-PP-Dol is a substrate for ALG8, the following enzyme in the biosynthetic pathway. This is Dolichyl pyrophosphate Man9GlcNAc2 alpha-1,3-glucosyltransferase from Rattus norvegicus (Rat).